A 483-amino-acid polypeptide reads, in one-letter code: V-type proton ATPase subunit H (483 aa).

Phosphoserine occurs at positions 59 and 483.

This sequence belongs to the V-ATPase H subunit family. In terms of assembly, V-ATPase is a heteromultimeric enzyme made up of two complexes: the ATP-hydrolytic V1 complex and the proton translocation V0 complex. The V1 complex consists of three catalytic AB heterodimers that form a heterohexamer, three peripheral stalks each consisting of EG heterodimers, one central rotor including subunits D and F, and the regulatory subunits C and H. The proton translocation complex V0 consists of the proton transport subunit a, a ring of proteolipid subunits c9c'', rotary subunit d, subunits e and f, and the accessory subunits ATP6AP1/Ac45 and ATP6AP2/PRR. Interacts with AP2M1.

Its subcellular location is the cytoplasmic vesicle. It is found in the clathrin-coated vesicle membrane. In terms of biological role, subunit of the V1 complex of vacuolar(H+)-ATPase (V-ATPase), a multisubunit enzyme composed of a peripheral complex (V1) that hydrolyzes ATP and a membrane integral complex (V0) that translocates protons. V-ATPase is responsible for acidifying and maintaining the pH of intracellular compartments and in some cell types, is targeted to the plasma membrane, where it is responsible for acidifying the extracellular environment. Subunit H is essential for V-ATPase activity, but not for the assembly of the complex. Involved in the endocytosis mediated by clathrin-coated pits, required for the formation of endosomes. In Mus musculus (Mouse), this protein is V-type proton ATPase subunit H (Atp6v1h).